Here is a 384-residue protein sequence, read N- to C-terminus: Succinate--CoA ligase [ADP-forming] subunit beta (384 aa).

The ATP-grasp domain maps to 9–242 (KAILAQYKVP…LNEEDPLEVE (234 aa)). ATP is bound by residues Lys-45, 52–54 (GRG), Glu-98, Leu-101, and Glu-106. Mg(2+) is bound by residues Asn-197 and Asp-211. Residues Asn-262 and 319–321 (GIL) each bind substrate.

It belongs to the succinate/malate CoA ligase beta subunit family. As to quaternary structure, heterotetramer of two alpha and two beta subunits. It depends on Mg(2+) as a cofactor.

The catalysed reaction is succinate + ATP + CoA = succinyl-CoA + ADP + phosphate. It catalyses the reaction GTP + succinate + CoA = succinyl-CoA + GDP + phosphate. It functions in the pathway carbohydrate metabolism; tricarboxylic acid cycle; succinate from succinyl-CoA (ligase route): step 1/1. In terms of biological role, succinyl-CoA synthetase functions in the citric acid cycle (TCA), coupling the hydrolysis of succinyl-CoA to the synthesis of either ATP or GTP and thus represents the only step of substrate-level phosphorylation in the TCA. The beta subunit provides nucleotide specificity of the enzyme and binds the substrate succinate, while the binding sites for coenzyme A and phosphate are found in the alpha subunit. The chain is Succinate--CoA ligase [ADP-forming] subunit beta from Solibacter usitatus (strain Ellin6076).